The primary structure comprises 232 residues: Ubiquitin-conjugating enzyme E2-24 kDa (232 aa).

Positions 1 to 37 (MSSTPAAGSAAEVATSSATSNAPSAPSTTASNVSNTS) are enriched in low complexity. The disordered stretch occupies residues 1–87 (MSSTPAAGSA…PRISRALGTS (87 aa)). Residues 58–67 (GASGSNAGGG) show a composition bias toward gly residues. In terms of domain architecture, UBC core spans 86 to 232 (TSAKRIQKEL…ARLWTKRYAT (147 aa)). Cys170 acts as the Glycyl thioester intermediate in catalysis.

Belongs to the ubiquitin-conjugating enzyme family.

It carries out the reaction S-ubiquitinyl-[E1 ubiquitin-activating enzyme]-L-cysteine + [E2 ubiquitin-conjugating enzyme]-L-cysteine = [E1 ubiquitin-activating enzyme]-L-cysteine + S-ubiquitinyl-[E2 ubiquitin-conjugating enzyme]-L-cysteine.. The protein operates within protein modification; protein ubiquitination. In terms of biological role, catalyzes the covalent attachment of ubiquitin to other proteins. The sequence is that of Ubiquitin-conjugating enzyme E2-24 kDa from Drosophila melanogaster (Fruit fly).